Consider the following 384-residue polypeptide: Putative aminohydrolase MTH_994 (384 aa).

Histidine 60, histidine 62, histidine 207, and aspartate 291 together coordinate Zn(2+).

Belongs to the metallo-dependent hydrolases superfamily. ATZ/TRZ family.

This Methanothermobacter thermautotrophicus (strain ATCC 29096 / DSM 1053 / JCM 10044 / NBRC 100330 / Delta H) (Methanobacterium thermoautotrophicum) protein is Putative aminohydrolase MTH_994.